We begin with the raw amino-acid sequence, 591 residues long: Max-binding protein MNT (591 aa).

N-acetylserine is present on Ser2. Disordered regions lie at residues 17–122 and 182–223; these read AQQQ…APRQ and PGVQ…GIGT. Residues 22–44 are compositionally biased toward basic and acidic residues; it reads RAREEQERLRLEREREREQEQKR. 2 stretches are compositionally biased toward pro residues: residues 63–84 and 102–120; these read EAPP…PLAT and SLPP…PLAP. The span at 205-216 shows a compositional bias: basic and acidic residues; that stretch reads PAEEAKSSEQKK. One can recognise a bHLH domain in the interval 222–273; the sequence is GTREVHNKLEKNRRAHLKECFETLKRNIPNVDDKKTSNLSVLRTALRYIQSL. The tract at residues 273-301 is leucine-zipper; the sequence is LKRKEKEYEHEMERLAREKIATQQRLAEL. The segment at 321–426 is disordered; the sequence is TGQPEDDQAS…PPPATPTQTL (106 aa). The segment covering 336-346 has biased composition (acidic residues); sequence EGEDNVDEEME. Positions 374–383 are enriched in pro residues; it reads STAPAPLPTH. Residues 390–411 are compositionally biased toward low complexity; that stretch reads PVALSPAHLPVQQQQPPQQKTP. Pro residues predominate over residues 412–421; that stretch reads LPAPPPPPAT.

As to quaternary structure, efficient DNA binding requires dimerization with another bHLH protein. Binds DNA as a homodimer or a heterodimer with MAX.

Its subcellular location is the nucleus. Binds DNA as a heterodimer with MAX and represses transcription. Binds to the canonical E box sequence 5'-CACGTG-3' and, with higher affinity, to 5'-CACGCG-3'. This chain is Max-binding protein MNT (Mnt), found in Mus musculus (Mouse).